The chain runs to 213 residues: Outer-membrane lipoprotein carrier protein (213 aa).

The first 23 residues, 1–23, serve as a signal peptide directing secretion; the sequence is MKKLLKQSLLGFALVSMTGAAFA.

The protein belongs to the LolA family. Monomer.

The protein localises to the periplasm. Its function is as follows. Participates in the translocation of lipoproteins from the inner membrane to the outer membrane. Only forms a complex with a lipoprotein if the residue after the N-terminal Cys is not an aspartate (The Asp acts as a targeting signal to indicate that the lipoprotein should stay in the inner membrane). The sequence is that of Outer-membrane lipoprotein carrier protein from Actinobacillus pleuropneumoniae serotype 3 (strain JL03).